A 482-amino-acid polypeptide reads, in one-letter code: BTB/POZ domain-containing protein 6-B (482 aa).

The BTB domain maps to 80-150 (ADVHFVVGPP…MYSDEIELEA (71 aa)).

In terms of assembly, interacts with cul3. Interacts (via BTB domain) with zbtb16/plzf. In embryos, expressed in the cranial ganglia.

It is found in the cytoplasm. The protein localises to the nucleus. In terms of biological role, adapter protein for the cul3 E3 ubiquitin-protein ligase complex. Promotes the export of zbtb16/plzf from the nucleus to the cytoplasm and targets zbtb16/plzf for ubiquitination and degradation. Up-regulates neurog1 expression and antagonizes zbtb16/plzf, to promote neurogenesis. This chain is BTB/POZ domain-containing protein 6-B (btbd6b), found in Danio rerio (Zebrafish).